Reading from the N-terminus, the 362-residue chain is Probable branched-chain-amino-acid aminotransferase (362 aa).

N6-(pyridoxal phosphate)lysine is present on lysine 202.

This sequence belongs to the class-IV pyridoxal-phosphate-dependent aminotransferase family. Requires pyridoxal 5'-phosphate as cofactor.

It carries out the reaction L-leucine + 2-oxoglutarate = 4-methyl-2-oxopentanoate + L-glutamate. It catalyses the reaction L-isoleucine + 2-oxoglutarate = (S)-3-methyl-2-oxopentanoate + L-glutamate. The enzyme catalyses L-valine + 2-oxoglutarate = 3-methyl-2-oxobutanoate + L-glutamate. It participates in amino-acid biosynthesis; L-isoleucine biosynthesis; L-isoleucine from 2-oxobutanoate: step 4/4. The protein operates within amino-acid biosynthesis; L-leucine biosynthesis; L-leucine from 3-methyl-2-oxobutanoate: step 4/4. Its pathway is amino-acid biosynthesis; L-valine biosynthesis; L-valine from pyruvate: step 4/4. Functionally, acts on leucine, isoleucine and valine. The sequence is that of Probable branched-chain-amino-acid aminotransferase (ilvE) from Streptomyces coelicolor (strain ATCC BAA-471 / A3(2) / M145).